Reading from the N-terminus, the 343-residue chain is D-alanine--D-alanine ligase (343 aa).

One can recognise an ATP-grasp domain in the interval 129 to 335 (KYVLENFGVK…YGELISEIIE (207 aa)). Residue 162–217 (ENKLGYDVFIKPSNSGSSVGISKAHNREELEAGLEEALKFDRKVLVEVALNAREIE) participates in ATP binding. Mg(2+) contacts are provided by Asp-288, Glu-302, and Asn-304.

The protein belongs to the D-alanine--D-alanine ligase family. Mg(2+) is required as a cofactor. Mn(2+) serves as cofactor.

The protein localises to the cytoplasm. It catalyses the reaction 2 D-alanine + ATP = D-alanyl-D-alanine + ADP + phosphate + H(+). The protein operates within cell wall biogenesis; peptidoglycan biosynthesis. In terms of biological role, cell wall formation. This is D-alanine--D-alanine ligase from Clostridium novyi (strain NT).